Reading from the N-terminus, the 207-residue chain is Large ribosomal subunit protein uL3 (207 aa).

The segment at 113-148 (KGKGFQGPIKRHGQSRGPMAHGSRYHRRPGSMGPVA) is disordered.

Belongs to the universal ribosomal protein uL3 family. In terms of assembly, part of the 50S ribosomal subunit. Forms a cluster with proteins L14 and L19.

In terms of biological role, one of the primary rRNA binding proteins, it binds directly near the 3'-end of the 23S rRNA, where it nucleates assembly of the 50S subunit. This is Large ribosomal subunit protein uL3 from Lactococcus lactis subsp. lactis (strain IL1403) (Streptococcus lactis).